A 245-amino-acid polypeptide reads, in one-letter code: Probable transcriptional regulatory protein Aflv_0709 (245 aa).

Residues 1 to 14 (MAGHSKWKNIQRRK) show a composition bias toward basic residues. The segment at 1 to 21 (MAGHSKWKNIQRRKNAQDAKR) is disordered.

The protein belongs to the TACO1 family.

Its subcellular location is the cytoplasm. The sequence is that of Probable transcriptional regulatory protein Aflv_0709 from Anoxybacillus flavithermus (strain DSM 21510 / WK1).